We begin with the raw amino-acid sequence, 160 residues long: Sec-independent protein translocase protein TatB (160 aa).

A helical transmembrane segment spans residues 1–21 (MFGMGFFEILVVLIVAIIFLG). Positions 118-160 (HLNEEVSNEEALNKEVSSDESPKEVQLTTDNNAKEHDKEKEHV) are disordered. 2 stretches are compositionally biased toward basic and acidic residues: residues 128 to 140 (ALNKEVSSDESPK) and 149 to 160 (NAKEHDKEKEHV).

It belongs to the TatB family. As to quaternary structure, the Tat system comprises two distinct complexes: a TatABC complex, containing multiple copies of TatA, TatB and TatC subunits, and a separate TatA complex, containing only TatA subunits. Substrates initially bind to the TatABC complex, which probably triggers association of the separate TatA complex to form the active translocon.

It localises to the cell inner membrane. Its function is as follows. Part of the twin-arginine translocation (Tat) system that transports large folded proteins containing a characteristic twin-arginine motif in their signal peptide across membranes. Together with TatC, TatB is part of a receptor directly interacting with Tat signal peptides. TatB may form an oligomeric binding site that transiently accommodates folded Tat precursor proteins before their translocation. This Helicobacter pylori (strain J99 / ATCC 700824) (Campylobacter pylori J99) protein is Sec-independent protein translocase protein TatB.